Reading from the N-terminus, the 49-residue chain is Agglutinin-1 (49 aa).

Homooligomer. In terms of processing, glycosylated.

Beta-galactoside specific lectin. Has a hemagglutinating activity on erythrocytes. This chain is Agglutinin-1, found in Pomacea flagellata (Apple snail).